A 319-amino-acid polypeptide reads, in one-letter code: Zinc metalloproteinase/disintegrin (319 aa).

A propeptide spanning residues 1–28 (EDEAPKMCGVTQNWESYEPIKKASQSNL) is cleaved from the precursor. The 197-residue stretch at 34–230 (RYIELVIVAD…QKPQCILNKP (197 aa)) folds into the Peptidase M12B domain. Residues E37 and D121 each contribute to the Ca(2+) site. 3 disulfide bridges follow: C145–C225, C185–C209, and C187–C192. H170 serves as a coordination point for Zn(2+). Residue E171 is part of the active site. Zn(2+)-binding residues include H174 and H180. C225 and N228 together coordinate Ca(2+). Positions 231–246 (LRTDTVSTPVSGNELL) are excised as a propeptide. Residues 238-319 (TPVSGNELLE…AGCPRNPFHA (82 aa)) form the Disintegrin domain. Disulfide bonds link C252/C267, C254/C262, C261/C284, C275/C281, C280/C305, and C293/C312. Residues 297 to 299 (RGD) carry the Cell attachment site motif.

This sequence belongs to the venom metalloproteinase (M12B) family. P-II subfamily. P-IIa sub-subfamily. As to quaternary structure, monomer. Zn(2+) serves as cofactor. In terms of tissue distribution, expressed by the venom gland.

It is found in the secreted. Its activity is regulated as follows. Excess of calcium ions significantly suppress the autoproteolysis of the enzyme. Metalloproteinase that impairs hemostasis in the envenomed animal. Shows autoproteolysis dependent on pH and temperature. Does not show hemorrhagic activity. Its function is as follows. Inhibits platelet aggregation induced by ADP (IC(50) is 200 nM), collagen (IC(50) is 500 nM), thrombin and epinephrin (IC(50) is 300 nM). Does not inhibit aggregation induced by ristocetin. Functionally, inhibits platelet aggregation induced by ADP (IC(50) is 100 nM), collagen (IC(50) is 500 nM), thrombin and epinephrin (IC(50) is 300 nM). Does not inhibit aggregation induced by ristocetin. Significantly inhibits angiogenesis both in vivo and in vitro. This Gloydius brevicauda (Korean slamosa snake) protein is Zinc metalloproteinase/disintegrin.